The primary structure comprises 175 residues: Tumor necrosis factor receptor superfamily member 13C (175 aa).

The Extracellular segment spans residues 1–71 (MGARRLRVRS…EGSALRPDVA (71 aa)). The TNFR-Cys; truncated repeat unit spans residues 21–38 (QCNQTECFDPLVRNCVSC). 2 disulfide bridges follow: Cys22-Cys35 and Cys27-Cys38. Residue Asn23 is glycosylated (N-linked (GlcNAc...) asparagine). The essential for TNFSF13B/TALL1/BAFF/BLyS binding stretch occupies residues 29–34 (DPLVRN). The chain crosses the membrane as a helical; Signal-anchor for type III membrane protein span at residues 72-92 (LLVGAPALLGLILALTLVGLV). Over 93 to 175 (SLVSWRWRQQ…VTTKTAGPEQ (83 aa)) the chain is Cytoplasmic. A disordered region spans residues 124-175 (VPSSETPHASAPTWPPLKEDADSALPRHSVPVPATELGSTELVTTKTAGPEQ). Residues 160–175 (LGSTELVTTKTAGPEQ) show a composition bias toward polar residues.

In terms of tissue distribution, highly expressed in spleen and testis; detected at lower levels in lung and thymus.

It is found in the membrane. Its function is as follows. B-cell receptor specific for TNFSF13B/TALL1/BAFF/BLyS. Promotes the survival of mature B-cells and the B-cell response. The chain is Tumor necrosis factor receptor superfamily member 13C (Tnfrsf13c) from Mus musculus (Mouse).